Reading from the N-terminus, the 91-residue chain is uncharacterized protein (91 aa).

This is an uncharacterized protein from Homo sapiens (Human).